A 914-amino-acid polypeptide reads, in one-letter code: MRTLGAMAVMLVVMGTAIFLPFLLRSRDILGGKTMTSHVISVVETSQLLVDNAVYNTMKRNLKKRGVLSPAQLLSFSKLPESTSGAISRAAEIMETSIQVMKREQSQFSTDALSADILATIANLSGCLPFMLPPRCPDTCLANKYRPITGVCNNRDHPRWGASNTALARWLPPVYEDGFSQPRGWNPNFLYHGFPLPPVREVTRHLIQVSNEAVTEDDQYSDFLPVWGQYIDHDIALTPQSTSTAAFWGGVDCQLTCENQNPCFPIQLPSNSSRTTACLPFYRSSAACGTGDQGALFGNLSAANPRQQMNGLTSFLDASTVYGSSPGVEKQLRNWSSSAGLLRVNTLHLDSGRAYLPFASAACAPEPGAPHANRTPCFLAGDGRASEVPALAAVHTLWLREHNRLATAFKAINTHWSANTAYQEARKVVGALHQIITMRDYIPKILGPDAFRQYVGPYEGYNPTVNPTVSNVFSTAAFRFGHATVHPLVRRLNTDFQDHTELPRLQLHDVFFRPWRLIQEGGLDPIVRGLLARPAKLQVQEQLMNEELTERLFVLSNVGTLDLASLNLQRGRDHGLPGYNEWREFCGLSRLDTGAELNKAIANRSMVNKIMELYKHADNIDVWLGGLAEKFLPGARTGPLFACIIGKQMKALRDGDRFWWENSHVFTDAQRQELEKHSLPRVICDNTGLTRVPVDAFRIGKFPQDFESCEEIPSMDLRLWRETFPQDDKCVFPEKVDNGNFVHCEESGKLVLVYSCFHGYKLQGQEQVTCTQNGWDSEPPVCKDVNECADLTHPPCHSSAKCKNTKGSFQCVCTDPYMLGEDEKTCIDSGRLPRASWVSIALGALLIGGLASLSWTVICRWTHADKKSTLLITERVTMESGFRKSQESGISPQKAEVQDAEQEPAYGSRVLLCE.

The N-terminal stretch at 1–31 is a signal peptide; that stretch reads MRTLGAMAVMLVVMGTAIFLPFLLRSRDILG. Residues 32 to 834 lie on the Extracellular side of the membrane; it reads GKTMTSHVIS…TCIDSGRLPR (803 aa). Residue N123 is glycosylated (N-linked (GlcNAc...) asparagine). A disulfide bridge connects residues C136 and C152. Residue D232 coordinates heme b. The active-site Proton acceptor is H233. D234 is a binding site for Ca(2+). Cystine bridges form between C253–C263 and C257–C278. N271 and N299 each carry an N-linked (GlcNAc...) asparagine glycan. 4 residues coordinate Ca(2+): T313, F315, D317, and S319. The N-linked (GlcNAc...) asparagine glycan is linked to N334. 2 residues coordinate heme b: E387 and H482. 7 cysteine pairs are disulfide-bonded: C586–C643, C684–C709, C730–C770, C756–C782, C788–C802, C796–C811, and C813–C826. Residue N603 is glycosylated (N-linked (GlcNAc...) asparagine). Residues 728-783 enclose the Sushi domain; sequence DKCVFPEKVDNGNFVHCEESGKLVLVYSCFHGYKLQGQEQVTCTQNGWDSEPPVCK. The EGF-like; calcium-binding domain maps to 784–827; the sequence is DVNECADLTHPPCHSSAKCKNTKGSFQCVCTDPYMLGEDEKTCI. A helical membrane pass occupies residues 835 to 859; it reads ASWVSIALGALLIGGLASLSWTVIC. At 860–914 the chain is on the cytoplasmic side; the sequence is RWTHADKKSTLLITERVTMESGFRKSQESGISPQKAEVQDAEQEPAYGSRVLLCE. The tract at residues 882 to 907 is disordered; sequence FRKSQESGISPQKAEVQDAEQEPAYG.

It belongs to the peroxidase family. XPO subfamily. As to quaternary structure, interacts with DUOX1, DUOX2 and CYBA. The cofactor is Ca(2+). Heme b serves as cofactor. Heme is covalently bound through a H(2)O(2)-dependent autocatalytic process. Heme insertion is important for the delivery of protein at the cell surface. In terms of processing, cleaved in its N-terminal part.

It localises to the membrane. The enzyme catalyses 2 iodide + H2O2 + 2 H(+) = diiodine + 2 H2O. The catalysed reaction is [thyroglobulin]-L-tyrosine + iodide + H2O2 + H(+) = [thyroglobulin]-3-iodo-L-tyrosine + 2 H2O. It catalyses the reaction [thyroglobulin]-3-iodo-L-tyrosine + iodide + H2O2 + H(+) = [thyroglobulin]-3,5-diiodo-L-tyrosine + 2 H2O. It carries out the reaction 2 [thyroglobulin]-3,5-diiodo-L-tyrosine + H2O2 = [thyroglobulin]-L-thyroxine + [thyroglobulin]-dehydroalanine + 2 H2O. The enzyme catalyses [thyroglobulin]-3-iodo-L-tyrosine + [thyroglobulin]-3,5-diiodo-L-tyrosine + H2O2 = [thyroglobulin]-3,3',5-triiodo-L-thyronine + [thyroglobulin]-dehydroalanine + 2 H2O. It functions in the pathway hormone biosynthesis; thyroid hormone biosynthesis. In terms of biological role, iodination and coupling of the hormonogenic tyrosines in thyroglobulin to yield the thyroid hormones T(3) and T(4). This chain is Thyroid peroxidase (Tpo), found in Rattus norvegicus (Rat).